Consider the following 217-residue polypeptide: uncharacterized protein (217 aa).

This is an uncharacterized protein from Acidianus sp. F28 (AFV-2).